The chain runs to 186 residues: Alkyl hydroperoxide reductase AhpD (186 aa).

The Proton donor role is filled by Cys-131. Cys-131 and Cys-134 form a disulfide bridge. Residue Cys-134 is the Cysteine sulfenic acid (-SOH) intermediate of the active site.

Belongs to the AhpD family.

It carries out the reaction N(6)-[(R)-dihydrolipoyl]-L-lysyl-[lipoyl-carrier protein] + a hydroperoxide = N(6)-[(R)-lipoyl]-L-lysyl-[lipoyl-carrier protein] + an alcohol + H2O. In terms of biological role, antioxidant protein with alkyl hydroperoxidase activity. Required for the reduction of the AhpC active site cysteine residues and for the regeneration of the AhpC enzyme activity. This is Alkyl hydroperoxide reductase AhpD from Rhodospirillum centenum (strain ATCC 51521 / SW).